A 739-amino-acid chain; its full sequence is Phosphoribosylformylglycinamidine synthase subunit PurL (739 aa).

Residue histidine 54 is part of the active site. Residues tyrosine 57 and lysine 96 each contribute to the ATP site. Position 98 (glutamate 98) interacts with Mg(2+). Substrate-binding positions include 99-102 (SHNH) and arginine 121. Histidine 100 functions as the Proton acceptor in the catalytic mechanism. A Mg(2+)-binding site is contributed by aspartate 122. Position 245 (glutamine 245) interacts with substrate. Aspartate 275 lines the Mg(2+) pocket. Substrate is bound at residue 319–321 (ESQ). Positions 504 and 541 each coordinate ATP. Mg(2+) is bound at residue asparagine 542. Residue serine 544 coordinates substrate.

It belongs to the FGAMS family. As to quaternary structure, monomer. Part of the FGAM synthase complex composed of 1 PurL, 1 PurQ and 2 PurS subunits.

The protein resides in the cytoplasm. The catalysed reaction is N(2)-formyl-N(1)-(5-phospho-beta-D-ribosyl)glycinamide + L-glutamine + ATP + H2O = 2-formamido-N(1)-(5-O-phospho-beta-D-ribosyl)acetamidine + L-glutamate + ADP + phosphate + H(+). It participates in purine metabolism; IMP biosynthesis via de novo pathway; 5-amino-1-(5-phospho-D-ribosyl)imidazole from N(2)-formyl-N(1)-(5-phospho-D-ribosyl)glycinamide: step 1/2. Part of the phosphoribosylformylglycinamidine synthase complex involved in the purines biosynthetic pathway. Catalyzes the ATP-dependent conversion of formylglycinamide ribonucleotide (FGAR) and glutamine to yield formylglycinamidine ribonucleotide (FGAM) and glutamate. The FGAM synthase complex is composed of three subunits. PurQ produces an ammonia molecule by converting glutamine to glutamate. PurL transfers the ammonia molecule to FGAR to form FGAM in an ATP-dependent manner. PurS interacts with PurQ and PurL and is thought to assist in the transfer of the ammonia molecule from PurQ to PurL. This Lactococcus lactis subsp. lactis (strain IL1403) (Streptococcus lactis) protein is Phosphoribosylformylglycinamidine synthase subunit PurL.